The primary structure comprises 565 residues: NAD-dependent malic enzyme (565 aa).

Residue Y104 is the Proton donor of the active site. R157 serves as a coordination point for NAD(+). K175 functions as the Proton acceptor in the catalytic mechanism. A divalent metal cation-binding residues include E246, D247, and D270. 2 residues coordinate NAD(+): D270 and N418.

This sequence belongs to the malic enzymes family. In terms of assembly, homotetramer. It depends on Mg(2+) as a cofactor. Mn(2+) serves as cofactor.

It catalyses the reaction (S)-malate + NAD(+) = pyruvate + CO2 + NADH. The enzyme catalyses oxaloacetate + H(+) = pyruvate + CO2. In Salmonella agona (strain SL483), this protein is NAD-dependent malic enzyme.